Consider the following 45-residue polypeptide: DNA-directed RNA polymerase subunit Rpo12 (45 aa).

Zn(2+) contacts are provided by C8, C23, and C26.

The protein belongs to the archaeal Rpo12/eukaryotic RPC10 RNA polymerase subunit family. Part of the RNA polymerase complex. Zn(2+) serves as cofactor.

It localises to the cytoplasm. It carries out the reaction RNA(n) + a ribonucleoside 5'-triphosphate = RNA(n+1) + diphosphate. In terms of biological role, DNA-dependent RNA polymerase (RNAP) catalyzes the transcription of DNA into RNA using the four ribonucleoside triphosphates as substrates. This is DNA-directed RNA polymerase subunit Rpo12 from Methanothrix thermoacetophila (strain DSM 6194 / JCM 14653 / NBRC 101360 / PT) (Methanosaeta thermophila).